We begin with the raw amino-acid sequence, 1432 residues long: DNA-directed RNA polymerase subunit beta (1432 aa).

The protein belongs to the RNA polymerase beta chain family. The RNAP catalytic core consists of 2 alpha, 1 beta, 1 beta' and 1 omega subunit. When a sigma factor is associated with the core the holoenzyme is formed, which can initiate transcription.

It catalyses the reaction RNA(n) + a ribonucleoside 5'-triphosphate = RNA(n+1) + diphosphate. Functionally, DNA-dependent RNA polymerase catalyzes the transcription of DNA into RNA using the four ribonucleoside triphosphates as substrates. This chain is DNA-directed RNA polymerase subunit beta, found in Solibacter usitatus (strain Ellin6076).